The following is a 121-amino-acid chain: Large ribosomal subunit protein uL14 (121 aa).

This sequence belongs to the universal ribosomal protein uL14 family. In terms of assembly, part of the 50S ribosomal subunit. Forms a cluster with proteins L3 and L19. In the 70S ribosome, L14 and L19 interact and together make contacts with the 16S rRNA in bridges B5 and B8.

Binds to 23S rRNA. Forms part of two intersubunit bridges in the 70S ribosome. The chain is Large ribosomal subunit protein uL14 from Parabacteroides distasonis (strain ATCC 8503 / DSM 20701 / CIP 104284 / JCM 5825 / NCTC 11152).